The sequence spans 198 residues: dITP/XTP pyrophosphatase (198 aa).

9-14 provides a ligand contact to substrate; it reads SNNAKK. Positions 41 and 70 each coordinate Mg(2+). The Proton acceptor role is filled by aspartate 70. Residues serine 71, 153–156, lysine 176, and 181–182 each bind substrate; these read FGYD and HR.

The protein belongs to the HAM1 NTPase family. As to quaternary structure, homodimer. The cofactor is Mg(2+).

It catalyses the reaction XTP + H2O = XMP + diphosphate + H(+). The enzyme catalyses dITP + H2O = dIMP + diphosphate + H(+). It carries out the reaction ITP + H2O = IMP + diphosphate + H(+). Functionally, pyrophosphatase that catalyzes the hydrolysis of nucleoside triphosphates to their monophosphate derivatives, with a high preference for the non-canonical purine nucleotides XTP (xanthosine triphosphate), dITP (deoxyinosine triphosphate) and ITP. Seems to function as a house-cleaning enzyme that removes non-canonical purine nucleotides from the nucleotide pool, thus preventing their incorporation into DNA/RNA and avoiding chromosomal lesions. In Aromatoleum aromaticum (strain DSM 19018 / LMG 30748 / EbN1) (Azoarcus sp. (strain EbN1)), this protein is dITP/XTP pyrophosphatase.